A 316-amino-acid chain; its full sequence is Acetyl-coenzyme A carboxylase carboxyl transferase subunit alpha (316 aa).

In terms of domain architecture, CoA carboxyltransferase C-terminal spans R39 to M293.

Belongs to the AccA family. Acetyl-CoA carboxylase is a heterohexamer composed of biotin carboxyl carrier protein (AccB), biotin carboxylase (AccC) and two subunits each of ACCase subunit alpha (AccA) and ACCase subunit beta (AccD).

It localises to the cytoplasm. The catalysed reaction is N(6)-carboxybiotinyl-L-lysyl-[protein] + acetyl-CoA = N(6)-biotinyl-L-lysyl-[protein] + malonyl-CoA. It participates in lipid metabolism; malonyl-CoA biosynthesis; malonyl-CoA from acetyl-CoA: step 1/1. Functionally, component of the acetyl coenzyme A carboxylase (ACC) complex. First, biotin carboxylase catalyzes the carboxylation of biotin on its carrier protein (BCCP) and then the CO(2) group is transferred by the carboxyltransferase to acetyl-CoA to form malonyl-CoA. This chain is Acetyl-coenzyme A carboxylase carboxyl transferase subunit alpha, found in Pseudomonas aeruginosa (strain UCBPP-PA14).